The chain runs to 156 residues: MKIIFVFALLAIVACNASARFDPLSQSYRQYQLQSHLLLQQQVLSPCSEFVRQQYSIVATPFWQPATFQLINNQVMQQQCCQQLRLVAQQSHYQAISIVQAIVQQLQLQQFSGVYFDQTQAQAQTLLTFNLPSICGIYPNYYSAPRSIATVGGVWY.

Residues 1–19 (MKIIFVFALLAIVACNASA) form the signal peptide. The interval 77-84 (QQQCCQQL) is octapeptide unique to cereal prolamins.

The protein belongs to the prolamin family.

The protein localises to the vacuole. Its subcellular location is the aleurone grain. Functionally, seed storage protein; serves as a source of nitrogen, carbon and sulfur for the young developing seedling. In Oryza sativa subsp. japonica (Rice), this protein is 13 kDa prolamin C (PROLM25).